A 396-amino-acid chain; its full sequence is Acetate kinase (396 aa).

Asparagine 7 is a binding site for Mg(2+). ATP is bound at residue lysine 14. Arginine 88 provides a ligand contact to substrate. Aspartate 145 acts as the Proton donor/acceptor in catalysis. ATP is bound by residues histidine 205–glycine 209, aspartate 279–arginine 281, and glycine 327–asparagine 331. Glutamate 381 lines the Mg(2+) pocket.

Belongs to the acetokinase family. Homodimer. The cofactor is Mg(2+). Mn(2+) serves as cofactor.

The protein resides in the cytoplasm. It catalyses the reaction acetate + ATP = acetyl phosphate + ADP. Its pathway is metabolic intermediate biosynthesis; acetyl-CoA biosynthesis; acetyl-CoA from acetate: step 1/2. Its function is as follows. Catalyzes the formation of acetyl phosphate from acetate and ATP. Can also catalyze the reverse reaction. This Campylobacter jejuni subsp. jejuni serotype O:23/36 (strain 81-176) protein is Acetate kinase.